The primary structure comprises 168 residues: uncharacterized protein (168 aa).

The or 19 signal peptide spans 1 to 21 (MKLLKALAVLSLATISSHSFA).

This is an uncharacterized protein from Haemophilus influenzae (strain ATCC 51907 / DSM 11121 / KW20 / Rd).